Here is a 335-residue protein sequence, read N- to C-terminus: Dolichyl-diphosphooligosaccharide--protein glycosyltransferase subunit MAGT1 (335 aa).

A signal peptide spans 1–29; that stretch reads MASPRWLWCVCATAAVTLLLVSKVPSASA. Residues 30–184 are Extracellular-facing; it reads QRKKEKVLVE…DVNIRVIRPP (155 aa). The Thioredoxin domain occupies 47-175; that stretch reads WTNQRPVIRM…IARWIADRTD (129 aa). An N-linked (GlcNAc...) asparagine glycan is attached at Asn71. Cys87 and Cys90 are joined by a disulfide. The chain crosses the membrane as a helical span at residues 185 to 205; sequence NYAGPLMLGLLLAVIGGLVYL. Over 206–209 the chain is Cytoplasmic; that stretch reads RRSN. Residues 210–230 form a helical membrane-spanning segment; the sequence is MEFLFNKTGWAFAALCFVLAM. Topologically, residues 231 to 270 are extracellular; it reads TSGQMWNHIRGPPYAHKNPHTGHVNYIHGSSQAQFVAETH. A helical membrane pass occupies residues 271-291; sequence IVLLFNGGVTLGMVLLCEAAA. The Cytoplasmic segment spans residues 292–300; sequence SDMDIGKRR. A helical transmembrane segment spans residues 301-321; that stretch reads MMCIAGIGLVVLFFSWMLSIF. Residues 322 to 335 lie on the Extracellular side of the membrane; it reads RSKYHGYPYSFLMS.

Belongs to the OST3/OST6 family. As to quaternary structure, accessory component of the STT3B-containing form of the oligosaccharyltransferase (OST) complex. OST exists in two different complex forms which contain common core subunits RPN1, RPN2, OST48, OST4, DAD1 and TMEM258, either STT3A or STT3B as catalytic subunits, and form-specific accessory subunits. OST can form stable complexes with the Sec61 complex or with both the Sec61 and TRAP complexes. The association of TUSC3 or MAGT1 with the STT3B-containing complex seems to be mutually exclusvice.

Its subcellular location is the cell membrane. The protein resides in the endoplasmic reticulum. It is found in the endoplasmic reticulum membrane. It participates in protein modification; protein glycosylation. In terms of biological role, accessory component of the STT3B-containing form of the N-oligosaccharyl transferase (OST) complex which catalyzes the transfer of a high mannose oligosaccharide from a lipid-linked oligosaccharide donor to an asparagine residue within an Asn-X-Ser/Thr consensus motif in nascent polypeptide chains. Involved in N-glycosylation of STT3B-dependent substrates. Specifically required for the glycosylation of a subset of acceptor sites that are near cysteine residues; in this function seems to act redundantly with TUSC3. In its oxidized form proposed to form transient mixed disulfides with a glycoprotein substrate to facilitate access of STT3B to the unmodified acceptor site. Also has oxidoreductase-independent functions in the STT3B-containing OST complex possibly involving substrate recognition. Could indirectly play a role in Mg(2+) transport in epithelial cells. The polypeptide is Dolichyl-diphosphooligosaccharide--protein glycosyltransferase subunit MAGT1 (Rattus norvegicus (Rat)).